The primary structure comprises 408 residues: Multidrug resistance protein MdtG (408 aa).

A run of 11 helical transmembrane segments spans residues 16 to 36 (LIVAWLGCFLTGAAFSLVMPF), 58 to 78 (IVFSITFLFSSIASPFWGGLA), 92 to 112 (LGMGIVMVLMGLAQNIWQFLI), 115 to 135 (ALLGLLGGFVPNANALIATQV), 146 to 166 (TLSTGGVSGALLGPMAGGLLA), 173 to 193 (PVFFITASVLILCFFVTLFCI), 224 to 244 (LFVTTLIIQVATGSIAPILTL), 256 to 276 (VAFISGMIASVPGVAALLSAP), 290 to 310 (ILITALIFSVLLLIPMSYVQT), 319 to 339 (FLLGAADGALLPAVQTLLVYN), and 378 to 398 (AVFLVTAGVVLFNAVYSWNSL).

It belongs to the major facilitator superfamily. DHA1 family. MdtG (TC 2.A.1.2.20) subfamily.

The protein localises to the cell inner membrane. Confers resistance to fosfomycin and deoxycholate. The sequence is that of Multidrug resistance protein MdtG from Escherichia coli (strain 55989 / EAEC).